The primary structure comprises 421 residues: Dihydroorotase (421 aa).

Zn(2+) contacts are provided by histidine 59 and histidine 61. Residues 61–63 and asparagine 93 contribute to the substrate site; that span reads HLR. Zn(2+) contacts are provided by aspartate 150, histidine 177, and histidine 230. Asparagine 276 serves as a coordination point for substrate. Residue aspartate 303 participates in Zn(2+) binding. Residue aspartate 303 is part of the active site. Position 307 (histidine 307) interacts with substrate.

It belongs to the metallo-dependent hydrolases superfamily. DHOase family. Class I DHOase subfamily. Zn(2+) serves as cofactor.

The enzyme catalyses (S)-dihydroorotate + H2O = N-carbamoyl-L-aspartate + H(+). The protein operates within pyrimidine metabolism; UMP biosynthesis via de novo pathway; (S)-dihydroorotate from bicarbonate: step 3/3. Functionally, catalyzes the reversible cyclization of carbamoyl aspartate to dihydroorotate. This Desulfotalea psychrophila (strain LSv54 / DSM 12343) protein is Dihydroorotase.